A 142-amino-acid polypeptide reads, in one-letter code: Hemoglobin subunit alpha-1 (142 aa).

An N-acetylserine modification is found at S1. The Globin domain occupies 1–142 (SLSDKDKAAV…VALALAQRYR (142 aa)). Residue H59 participates in O2 binding. H88 is a heme b binding site.

It belongs to the globin family. In terms of assembly, hb1 is a heterotetramer of two alpha-2 chains and two beta chains. In terms of tissue distribution, red blood cells.

Involved in oxygen transport from gills to the various peripheral tissues. The polypeptide is Hemoglobin subunit alpha-1 (hba1) (Notothenia neglecta (Yellowbelly rockcod)).